We begin with the raw amino-acid sequence, 25 residues long: Small ribosomal subunit protein eS32 (25 aa).

The tract at residues 1-25 (MRAKWRKKRMRRLKRKRRKMRARSK) is disordered.

This sequence belongs to the eukaryotic ribosomal protein eS32 family. Component of the small ribosomal subunit.

The sequence is that of Small ribosomal subunit protein eS32 (RpL41) from Spodoptera frugiperda (Fall armyworm).